We begin with the raw amino-acid sequence, 119 residues long: Large ribosomal subunit protein uL22c (119 aa).

It belongs to the universal ribosomal protein uL22 family. Part of the 50S ribosomal subunit.

The protein localises to the plastid. It is found in the chloroplast. This protein binds specifically to 23S rRNA. Functionally, the globular domain of the protein is located near the polypeptide exit tunnel on the outside of the subunit, while an extended beta-hairpin is found that lines the wall of the exit tunnel in the center of the 70S ribosome. In Angiopteris evecta (Mule's foot fern), this protein is Large ribosomal subunit protein uL22c (rpl22).